A 234-amino-acid chain; its full sequence is Phosphoribosylaminoimidazole-succinocarboxamide synthase (234 aa).

This sequence belongs to the SAICAR synthetase family.

It catalyses the reaction 5-amino-1-(5-phospho-D-ribosyl)imidazole-4-carboxylate + L-aspartate + ATP = (2S)-2-[5-amino-1-(5-phospho-beta-D-ribosyl)imidazole-4-carboxamido]succinate + ADP + phosphate + 2 H(+). It participates in purine metabolism; IMP biosynthesis via de novo pathway; 5-amino-1-(5-phospho-D-ribosyl)imidazole-4-carboxamide from 5-amino-1-(5-phospho-D-ribosyl)imidazole-4-carboxylate: step 1/2. This chain is Phosphoribosylaminoimidazole-succinocarboxamide synthase, found in Pyrobaculum aerophilum (strain ATCC 51768 / DSM 7523 / JCM 9630 / CIP 104966 / NBRC 100827 / IM2).